Reading from the N-terminus, the 744-residue chain is Elongation factor G, mitochondrial (744 aa).

The transit peptide at 1–25 (MTISCLLRIRPALAKSFFENGQRAF) directs the protein to the mitochondrion. Residues 38–315 (ERIRNIGISA…AVLDYLPNPG (278 aa)) enclose the tr-type G domain. GTP-binding positions include 47–54 (AHIDSGKT), 114–118 (DTPGH), and 168–171 (NKLD).

The protein belongs to the TRAFAC class translation factor GTPase superfamily. Classic translation factor GTPase family. EF-G/EF-2 subfamily.

It is found in the mitochondrion. It participates in protein biosynthesis; polypeptide chain elongation. Mitochondrial GTPase that catalyzes the GTP-dependent ribosomal translocation step during translation elongation. During this step, the ribosome changes from the pre-translocational (PRE) to the post-translocational (POST) state as the newly formed A-site-bound peptidyl-tRNA and P-site-bound deacylated tRNA move to the P and E sites, respectively. Catalyzes the coordinated movement of the two tRNA molecules, the mRNA and conformational changes in the ribosome. In Culex quinquefasciatus (Southern house mosquito), this protein is Elongation factor G, mitochondrial.